The primary structure comprises 1373 residues: Disease resistance protein RRS1 (1373 aa).

In terms of domain architecture, TIR spans 5-146 (EKDEEFVCIS…EIVRDVYETH (142 aa)). Positions 170–421 (IGIRCVGIWG…LLEGCGFFPH (252 aa)) constitute an NB-ARC domain. An ATP-binding site is contributed by 179–186 (GMPGIGKT). LRR repeat units follow at residues 498 to 522 (SEEI…AFKN), 535 to 553 (NPEV…HSLP), 554 to 575 (NELR…NFDP), 577 to 598 (HLVE…TKNL), 621 to 646 (AENL…RLLR), 665 to 688 (PPNI…TVKP), 742 to 766 (LPNM…SIQG), 768 to 793 (PRFL…SLEI), and 831 to 854 (PRNL…PLSL). The Nuclear localization signal motif lies at 988 to 1005 (RNFHCWAPGKVVPKVRKD). Residues 1204–1272 (IPAIDEGDLW…YLSEHNHPRP (69 aa)) constitute a DNA-binding region (WRKY). Residues 1300–1323 (RVFQNKDEPNKPHLPSSSTPPGNA) are disordered.

As to quaternary structure, interacts with PopP2, a R.solanacearum type III effector.

The protein localises to the nucleus. Functionally, transcription factor. Interacts specifically with the W box (5'-(T)TGAC[CT]-3'), a frequently occurring elicitor-responsive cis-acting element. Also acts as a disease resistance protein involved in resistance to fungal and bacterial pathogens, including R.solanacearum, P.syringae pv. tomato and C.higginsianum. The protein is Disease resistance protein RRS1 of Arabidopsis thaliana (Mouse-ear cress).